Consider the following 208-residue polypeptide: Receptor expression-enhancing protein 6 (208 aa).

Transmembrane regions (helical) follow at residues 49–69 (GAFL…GFVY), 93–113 (WVIY…LHWF), and 115–135 (FYYV…SWNG). The tract at residues 187 to 208 (VGPAESEPRSLPSSAHTEPTVD) is disordered. Positions 197 to 208 (LPSSAHTEPTVD) are enriched in polar residues.

The protein belongs to the DP1 family.

It localises to the endoplasmic reticulum membrane. The protein localises to the cytoplasmic vesicle. Its subcellular location is the clathrin-coated vesicle membrane. Functionally, required correct function and survival of retinal photoreceptors. Required for retinal development. In rod photoreceptors, facilitates stability and/or trafficking of guanylate cyclases and is required to maintain endoplasmic reticulum and mitochondrial homeostasis. May play a role in clathrin-coated intracellular vesicle trafficking of proteins from the endoplasmic reticulum to the retinal rod plasma membrane. In Danio rerio (Zebrafish), this protein is Receptor expression-enhancing protein 6.